The sequence spans 931 residues: Probable UDP-N-acetylglucosamine--peptide N-acetylglucosaminyltransferase SPINDLY (931 aa).

A compositionally biased stretch (basic and acidic residues) spans 1-15 (MAWTEKDVENGKESE). Residues 1–38 (MAWTEKDVENGKESESLGNNGFLKGGQSSSGSKGSPGR) form a disordered region. The span at 25 to 37 (GGQSSSGSKGSPG) shows a compositional bias: low complexity. TPR repeat units lie at residues 48–81 (DKDA…DSKS), 82–115 (IESL…DPQN), 116–149 (ACAL…DPSY), 157–190 (AIVL…DSHY), 191–224 (APAY…RPMY), 225–258 (AEAY…SPNF), 266–299 (AIAL…NWHY), 300–333 (ADAM…NPHC), 334–367 (AEAC…KPNF), 369–401 (QSLN…NPTY), and 402–435 (AEAY…DPDS). Residues 436–931 (RNAGQNRLLA…NHNGNHGNLS (496 aa)) form a catalytic region region. The segment covering 864–884 (QQQQTQTESVVPEESSVNPSE) has biased composition (low complexity). The tract at residues 864 to 931 (QQQQTQTESV…NHNGNHGNLS (68 aa)) is disordered. Positions 910–931 (KSSTSEENGVQSNHNGNHGNLS) are enriched in polar residues.

This sequence belongs to the glycosyltransferase 41 family. O-GlcNAc transferase subfamily.

The protein resides in the nucleus. It catalyses the reaction L-seryl-[protein] + UDP-N-acetyl-alpha-D-glucosamine = 3-O-(N-acetyl-beta-D-glucosaminyl)-L-seryl-[protein] + UDP + H(+). The catalysed reaction is L-threonyl-[protein] + UDP-N-acetyl-alpha-D-glucosamine = 3-O-(N-acetyl-beta-D-glucosaminyl)-L-threonyl-[protein] + UDP + H(+). It participates in protein modification; protein glycosylation. Probable O-linked N-acetylglucosamine transferase (OGT) involved in various processes such as gibberellin (GA) signaling pathway. OGTs catalyze the addition of nucleotide-activated sugars directly onto the polypeptide through O-glycosidic linkage with the hydroxyl of serine or threonine. Probably acts by adding O-linked sugars to yet unknown proteins. In Solanum lycopersicum (Tomato), this protein is Probable UDP-N-acetylglucosamine--peptide N-acetylglucosaminyltransferase SPINDLY (SPY).